The following is a 201-amino-acid chain: UPF0301 protein Atu0781 (201 aa).

The protein belongs to the UPF0301 (AlgH) family.

The chain is UPF0301 protein Atu0781 from Agrobacterium fabrum (strain C58 / ATCC 33970) (Agrobacterium tumefaciens (strain C58)).